Here is a 531-residue protein sequence, read N- to C-terminus: Peroxinectin A (531 aa).

The N-terminal stretch at 1-21 is a signal peptide; that stretch reads MRLNLISFFIIFTILVSISNS. An N-linked (GlcNAc...) asparagine glycan is attached at asparagine 62. Histidine 101 serves as the catalytic Proton acceptor. N-linked (GlcNAc...) asparagine glycans are attached at residues asparagine 131 and asparagine 338.

Belongs to the peroxidase family.

It localises to the secreted. The enzyme catalyses 2 a phenolic donor + H2O2 = 2 a phenolic radical donor + 2 H2O. The protein is Peroxinectin A (poxA) of Dictyostelium discoideum (Social amoeba).